The primary structure comprises 297 residues: Protein LRATD1 (297 aa).

At S38 the chain carries Phosphoserine. Residues P138–A233 form the LRAT domain.

Belongs to the LRATD family.

Its subcellular location is the cytoplasm. May play a role in cell morphology and motility. This is Protein LRATD1 (LRATD1) from Bos taurus (Bovine).